The following is a 466-amino-acid chain: Citrate synthase, mitochondrial (466 aa).

A mitochondrion-targeting transit peptide spans 1–27 (MALLTAAARLFGAKNASCLVLAARHAS). The SIFI-degron motif lies at 2 to 21 (ALLTAAARLFGAKNASCLVL). The residue at position 57 (K57) is an N6-succinyllysine. K76 carries the N6-acetyllysine; alternate modification. K76 carries the N6-succinyllysine; alternate modification. N6-succinyllysine occurs at positions 103 and 193. S226 is modified (phosphoserine). Residue H301 is part of the active site. K321 and K327 each carry N6-acetyllysine; alternate. N6-succinyllysine; alternate occurs at positions 321 and 327. The active site involves H347. R356 is an oxaloacetate binding site. K375 carries the N6-acetyllysine; alternate modification. Residue K375 is modified to N6-succinyllysine; alternate. An N6-acetyllysine modification is found at K382. The residue at position 393 (K393) is an N6-acetyllysine; alternate. N6-succinyllysine; alternate is present on K393. K395 is modified (N6,N6,N6-trimethyllysine). The active site involves D402. Residues R428 and R448 each coordinate oxaloacetate. K450 carries the N6-succinyllysine modification. At K459 the chain carries N6-acetyllysine; alternate. Residue K459 is modified to N6-succinyllysine; alternate.

This sequence belongs to the citrate synthase family. As to quaternary structure, homodimer. Post-translationally, methylated. Trimethylation at Lys-395 by CSKMT decreases citrate synthase activity. In response to mitochondrial stress, the precursor protein is ubiquitinated by the SIFI complex in the cytoplasm before mitochondrial import, leading to its degradation. Within the SIFI complex, UBR4 initiates ubiquitin chain that are further elongated or branched by KCMF1.

Its subcellular location is the mitochondrion matrix. It carries out the reaction oxaloacetate + acetyl-CoA + H2O = citrate + CoA + H(+). Its pathway is carbohydrate metabolism; tricarboxylic acid cycle; isocitrate from oxaloacetate: step 1/2. Functionally, key enzyme of the Krebs tricarboxylic acid cycle which catalyzes the synthesis of citrate from acetyl coenzyme A and oxaloacetate. The polypeptide is Citrate synthase, mitochondrial (CS) (Bos taurus (Bovine)).